Consider the following 82-residue polypeptide: Cysteine proteinase inhibitor A (82 aa).

Belongs to the cystatin family.

Functionally, strong inhibitor of papain and ficin but poor inhibitor of cathepsin H, B and L. The sequence is that of Cysteine proteinase inhibitor A from Helianthus annuus (Common sunflower).